A 130-amino-acid chain; its full sequence is Small ribosomal subunit protein uS9 (130 aa).

It belongs to the universal ribosomal protein uS9 family.

In Bordetella avium (strain 197N), this protein is Small ribosomal subunit protein uS9.